Here is a 102-residue protein sequence, read N- to C-terminus: Small ribosomal subunit protein bS18 (102 aa).

The protein belongs to the bacterial ribosomal protein bS18 family. In terms of assembly, part of the 30S ribosomal subunit. Forms a tight heterodimer with protein bS6.

In terms of biological role, binds as a heterodimer with protein bS6 to the central domain of the 16S rRNA, where it helps stabilize the platform of the 30S subunit. The chain is Small ribosomal subunit protein bS18 from Orientia tsutsugamushi (strain Boryong) (Rickettsia tsutsugamushi).